Consider the following 78-residue polypeptide: Large ribosomal subunit protein bL28 (78 aa).

Residues 1-20 are disordered; it reads MSRVCQVTGKGPVTGNNISH.

It belongs to the bacterial ribosomal protein bL28 family.

This Pseudomonas fluorescens (strain ATCC BAA-477 / NRRL B-23932 / Pf-5) protein is Large ribosomal subunit protein bL28.